We begin with the raw amino-acid sequence, 254 residues long: Esterase YbfF (254 aa).

Residues Ser-89 and His-234 contribute to the active site.

It belongs to the DmpD/TodF/XylF esterase family.

Displays esterase activity toward palmitoyl-CoA, malonyl-CoA and pNP-butyrate. This Escherichia coli (strain K12) protein is Esterase YbfF (ybfF).